A 98-amino-acid polypeptide reads, in one-letter code: Peptide YY (98 aa).

The N-terminal stretch at 1-28 (MVAVRRPWPVTVAMLLILLACLGALVDA) is a signal peptide. S41 carries the phosphoserine modification. Y64 carries the tyrosine amide modification. Positions 68–98 (DVPAALFSKLLFTDDSDSENLPFRPEGLDQW) are excised as a propeptide.

The protein belongs to the NPY family. The peptide YY form is cleaved at Pro-30 by the prolyl endopeptidase FAP (seprase) activity (in vitro) to generate peptide YY(3-36).

The protein resides in the secreted. In terms of biological role, this gut peptide inhibits exocrine pancreatic secretion, has a vasoconstrictory action and inhibitis jejunal and colonic mobility. The chain is Peptide YY (Pyy) from Mus musculus (Mouse).